We begin with the raw amino-acid sequence, 158 residues long: Putative pre-16S rRNA nuclease (158 aa).

This sequence belongs to the YqgF nuclease family.

The protein resides in the cytoplasm. Its function is as follows. Could be a nuclease involved in processing of the 5'-end of pre-16S rRNA. This Hahella chejuensis (strain KCTC 2396) protein is Putative pre-16S rRNA nuclease.